We begin with the raw amino-acid sequence, 1205 residues long: Centrosome and spindle pole associated protein 1 (1205 aa).

Coiled-coil stretches lie at residues 12 to 34 and 87 to 108; these read QKAK…EMKG and KLKE…TQAK. Positions 16 to 37 are disordered; the sequence is LAKDKAELESDPPYMEMKGKAS. The span at 158–173 shows a compositional bias: basic and acidic residues; it reads STEKVRQVEKNIEPKS. Disordered stretches follow at residues 158–187, 222–277, and 380–467; these read STEK…KSDL, SRRP…PGVS, and QQKK…GSTL. Residues 176–187 are compositionally biased toward polar residues; the sequence is NKNPISQGKSDL. Composition is skewed to basic and acidic residues over residues 222 to 233 and 257 to 275; these read SRRPLKQTKEEV and ANGE…RDPG. Positions 357–391 form a coiled coil; it reads EDRELTKRRKEKYRQELLEQIAEQQKKKRREKDLA. Composition is skewed to basic and acidic residues over residues 401-410 and 417-428; these read DPEKSPDRLK and RHFEEMPPERPR. S405 bears the Phosphoserine mark. A compositionally biased stretch (pro residues) spans 433 to 447; that stretch reads TPPPPFSAPSSPSVP. A coiled-coil region spans residues 574–618; sequence STQSLQSYQEALQEQIREREARRKKERLEKEEYEAKLEAEMRIYN. The disordered stretch occupies residues 677–704; the sequence is AENLEDSANKNSGPLQTQSSPFARGNTF. Polar residues predominate over residues 685–697; it reads NKNSGPLQTQSSP. A coiled-coil region spans residues 724-813; sequence RFQIEEKRQR…EKHNLQLQHY (90 aa). Residues S850 and S869 each carry the phosphoserine modification. A disordered region spans residues 862–881; it reads SSMSRAQSPPVPARKNQLRA. Residues 874–911 are a coiled coil; it reads ARKNQLRAEEEKKNVIMELSEMRKQLRSEERRLQGRLL. Position 915 is a phosphoserine (S915). Residues 993-1014 adopt a coiled-coil conformation; the sequence is QQQALLREQQKRLNRIKMRRDA. Disordered regions lie at residues 1086-1105, 1124-1169, and 1182-1205; these read GLDF…SLKS, RLTE…RPGT, and NEEQ…AAHA. The segment covering 1124 to 1134 has biased composition (basic and acidic residues); it reads RLTEQQKKPTN. Positions 1135-1145 are enriched in acidic residues; sequence TDDEGSLVDPD. Residues 1146 to 1156 are compositionally biased toward basic and acidic residues; sequence DIMRHLSDDGR.

Interacts with PLEKHG6. Interacts with ARMC9, TOGARAM1, CCDC66, CEP104 and CEP290. Post-translationally, phosphorylated. Phosphorylation increases in colcemide-treated cells.

The protein resides in the cytoplasm. Its subcellular location is the cytoskeleton. It localises to the microtubule organizing center. It is found in the centrosome. The protein localises to the spindle. The protein resides in the spindle pole. Its subcellular location is the cell projection. It localises to the cilium. May play a role in cell-cycle-dependent microtubule organization. The sequence is that of Centrosome and spindle pole associated protein 1 (Cspp1) from Mus musculus (Mouse).